We begin with the raw amino-acid sequence, 706 residues long: MSTAVAEFKPSEKLLKTRNIGISAHIDSGKTTLTERILFYTNRIHAIHEVRGKDGVGAKMDSMDLERERGITIQSAATYCQWKNHTINIIDTPGHVDFTVEVERSLRVLDSAILVLCGVAGVQSQSITVDRQMRRYNVPRVAFINKLDRTGANPFRVIEQLKEKLKHNAVPVQIPIGLENDLKGVVDLVTMKAYYFEGKDGMDIQEKEIPDDLKELANKKHEELLDAASMFSDELTEALLEGTPTEEMIKKAIRTGTIELKITPVFMGSAFKNKGVQKLLDGVLDYLASPVDVKNKALDQNNNEEMIVLESNYEKPLVCLAFKLEDGRYGQLTYVRVYQGKLSKGMTIYNMSNNKKHNVGRLCRMHSDEMEDIDSAEAGDIIALFGIDCASGDTFTDGKLKVSMESMFVPAPVISLTIEAKESKHLNNLAKALNRFTKEDPTFQTHVDPESGQTIIKGMGELHLEVYIERMKREYGVELITGAPQVAYRETITSKADFDYTHKKQTGGQGQFGRVAGYMEPIPLEETLDYDFVNKVVGGAIPREYIQSVDKGFKSCLERGSLIGFPIIGVRCVINDGAYHDVDSSDMAFQIAGRYAFRQGFNKANPQILEPIMKVEVDGPSEFQGAILGSLNQRRGMILNTTEEDAYCKTEAEVPLADMFGYSTVLRSSTQGKAEFSMEFSRYAPVPRNVAEELMKKYKVNNKDED.

The tr-type G domain maps to Leu-15–Val-291. GTP is bound by residues Ala-24–Thr-31, Asp-91–His-95, and Asn-145–Asp-148.

This sequence belongs to the TRAFAC class translation factor GTPase superfamily. Classic translation factor GTPase family. EF-G/EF-2 subfamily.

It is found in the cytoplasm. In terms of biological role, catalyzes the GTP-dependent ribosomal translocation step during translation elongation. During this step, the ribosome changes from the pre-translocational (PRE) to the post-translocational (POST) state as the newly formed A-site-bound peptidyl-tRNA and P-site-bound deacylated tRNA move to the P and E sites, respectively. Catalyzes the coordinated movement of the two tRNA molecules, the mRNA and conformational changes in the ribosome. In Leptospira borgpetersenii serovar Hardjo-bovis (strain L550), this protein is Elongation factor G.